A 431-amino-acid polypeptide reads, in one-letter code: MSLWPNRSRNWRVHCDCRGFNLDRHVSEINERILEGDAAVFTADEIKDMVRDGDVPSADEVDVVTTATCGVMSGTAAVMHLRVSEPGSFRKAASVELNGIPAYPGPCPNENLGSVDLFIYGTGHSREDPDYGGGFLFRDLLLGSEVEVRVTSVEGRVVESTVTMDDIETARIVGTRMAFRNYTALVNPGETPVKSIFNAFEMPENCGGLSFSGCGDINPLENDPSMETVHQGTGVLLNGARAIVLGEGTRSSPIKPNLMLSGDLHDMKPRYIGGFRTAAGPEIFNTVAVPVPVTSERVLENLMVLNSDIKLPVADVRDRSRVITEITYEDVWSGDVRPVHHPERCTDCAVCLAARRCPTHAIDNGLDLDRCFGCGVCAWSCPSGAYEMDTGTVRIGELAVPIICRQSDRLRARELSLELKKLIENGDFLMG.

4Fe-4S ferredoxin-type domains lie at valine 336–aspartate 367 and isoleucine 362–glycine 391.

This is an uncharacterized protein from Methanothermobacter thermautotrophicus (strain ATCC 29096 / DSM 1053 / JCM 10044 / NBRC 100330 / Delta H) (Methanobacterium thermoautotrophicum).